The following is a 44-amino-acid chain: Photosystem II reaction center protein K (44 aa).

The propeptide occupies 1–7 (MTTLLLA). Residues 19–39 (IVDVLPVIPLLFLLLAFVWQA) traverse the membrane as a helical segment.

It belongs to the PsbK family. In terms of assembly, PSII is composed of 1 copy each of membrane proteins PsbA, PsbB, PsbC, PsbD, PsbE, PsbF, PsbH, PsbI, PsbJ, PsbK, PsbL, PsbM, PsbT, PsbX, PsbY, PsbZ, Psb30/Ycf12, at least 3 peripheral proteins of the oxygen-evolving complex and a large number of cofactors. It forms dimeric complexes.

It localises to the plastid. Its subcellular location is the chloroplast thylakoid membrane. Its function is as follows. One of the components of the core complex of photosystem II (PSII). PSII is a light-driven water:plastoquinone oxidoreductase that uses light energy to abstract electrons from H(2)O, generating O(2) and a proton gradient subsequently used for ATP formation. It consists of a core antenna complex that captures photons, and an electron transfer chain that converts photonic excitation into a charge separation. This Tupiella akineta (Green alga) protein is Photosystem II reaction center protein K.